The primary structure comprises 530 residues: Hyalin (530 aa).

HYR domains follow at residues 1–66 (NVEI…TVTA), 67–150 (TDSI…NVVE), 151–234 (VDTT…NVVE), 235–319 (VDTT…NVVE), 320–403 (VDTT…NIVE), 404–486 (EDTT…TVNT), and 487–530 (VDTT…ASLV).

Homooligomer in presence of calcium. In terms of processing, glycosylated.

The protein localises to the secreted. It is found in the extracellular space. It localises to the extracellular matrix. Functionally, major constituent of the hyaline layer. The hyaline layer of echinoderm embryos is an extraembryonic matrix that functions as a substrate for cell adhesion through early development. In Lytechinus variegatus (Green sea urchin), this protein is Hyalin.